Here is a 227-residue protein sequence, read N- to C-terminus: MKVSYHGHSVVKIETNGKVILIDPFLTGNPKTDLKAEDVKVDAILLSHGHGDHVGDTVELAKKNNAVVVAPFELATFLSWQGVKTHPMHIGGSHEFDFGKVKFTQAFHGSSYIDEENKTITYTGMPAGILFTAEEKTLYHAGDTALFSDMKLIGELNNIDVAFLPIGDNFTMGPEDAVLAAKWVQAKTVVPMHYNTFPVIEQDPYQFVEKLQNCTGKVLEAGESITL.

It belongs to the UPF0173 family.

In Bacillus cereus (strain ATCC 10987 / NRS 248), this protein is UPF0173 metal-dependent hydrolase BCE_4747.